A 222-amino-acid polypeptide reads, in one-letter code: MSKITEIVDIDNDEEEYAKQAYIVEGDDLDFPRATINPKLQKLQSLVTEFITSVILKHEKEYYHLVLKMYKENAEYLLGTTQNTIISTICTLTKTFYNKLYHSFQKNDLNNGSVKFIQEMVSYADYGPHILLDKLFRITIDIHIDIIREELIVDETVEKPFDVYYDSLSIQLNKKLVSYNLLNALSKNDDDNDSQFVIVPDNHEVFDINIDKPLGKPTNQNQ.

This is an uncharacterized protein from Acanthamoeba polyphaga mimivirus (APMV).